The sequence spans 250 residues: NADH-quinone oxidoreductase subunit C (250 aa).

Belongs to the complex I 30 kDa subunit family. In terms of assembly, NDH-1 is composed of 14 different subunits. Subunits NuoB, C, D, E, F, and G constitute the peripheral sector of the complex.

It localises to the cell inner membrane. It carries out the reaction a quinone + NADH + 5 H(+)(in) = a quinol + NAD(+) + 4 H(+)(out). Functionally, NDH-1 shuttles electrons from NADH, via FMN and iron-sulfur (Fe-S) centers, to quinones in the respiratory chain. The immediate electron acceptor for the enzyme in this species is believed to be ubiquinone. Couples the redox reaction to proton translocation (for every two electrons transferred, four hydrogen ions are translocated across the cytoplasmic membrane), and thus conserves the redox energy in a proton gradient. This chain is NADH-quinone oxidoreductase subunit C, found in Xanthomonas campestris pv. campestris (strain 8004).